Here is a 250-residue protein sequence, read N- to C-terminus: Ureidoacrylate amidohydrolase RutB (250 aa).

Asp-44 functions as the Proton acceptor in the catalytic mechanism. Lys-153 is a catalytic residue. Cys-186 acts as the Nucleophile in catalysis.

The protein belongs to the isochorismatase family. RutB subfamily.

The catalysed reaction is (Z)-3-ureidoacrylate + H2O + H(+) = (Z)-3-aminoacrylate + NH4(+) + CO2. It carries out the reaction (Z)-3-ureidoacrylate + H2O = (Z)-3-aminoacrylate + carbamate + H(+). The enzyme catalyses (Z)-2-methylureidoacrylate + H2O + H(+) = (Z)-2-methylaminoacrylate + NH4(+) + CO2. Its function is as follows. Hydrolyzes ureidoacrylate to form aminoacrylate and carbamate. The carbamate hydrolyzes spontaneously, thereby releasing one of the nitrogen atoms of the pyrimidine ring as ammonia and one of its carbon atoms as CO2. In Pantoea ananatis (strain LMG 20103), this protein is Ureidoacrylate amidohydrolase RutB.